We begin with the raw amino-acid sequence, 214 residues long: tRNA (guanine-N(7)-)-methyltransferase (214 aa).

Residues Glu43, Glu68, Asp95, and Asp117 each coordinate S-adenosyl-L-methionine. Residue Asp117 is part of the active site. Residues Lys121, Asp153, and 190–193 (TEYE) each bind substrate.

Belongs to the class I-like SAM-binding methyltransferase superfamily. TrmB family.

The catalysed reaction is guanosine(46) in tRNA + S-adenosyl-L-methionine = N(7)-methylguanosine(46) in tRNA + S-adenosyl-L-homocysteine. The protein operates within tRNA modification; N(7)-methylguanine-tRNA biosynthesis. Its function is as follows. Catalyzes the formation of N(7)-methylguanine at position 46 (m7G46) in tRNA. The sequence is that of tRNA (guanine-N(7)-)-methyltransferase from Staphylococcus haemolyticus (strain JCSC1435).